Reading from the N-terminus, the 461-residue chain is Cysteine--tRNA ligase (461 aa).

Cysteine 28 is a binding site for Zn(2+). The short motif at 30–40 (VTIYDLCHIGH) is the 'HIGH' region element. Zn(2+) contacts are provided by cysteine 209, histidine 234, and glutamate 238. The 'KMSKS' region signature appears at 266 to 270 (KMSKS). Lysine 269 contacts ATP.

The protein belongs to the class-I aminoacyl-tRNA synthetase family. In terms of assembly, monomer. Zn(2+) is required as a cofactor.

The protein localises to the cytoplasm. The enzyme catalyses tRNA(Cys) + L-cysteine + ATP = L-cysteinyl-tRNA(Cys) + AMP + diphosphate. The protein is Cysteine--tRNA ligase of Hamiltonella defensa subsp. Acyrthosiphon pisum (strain 5AT).